A 269-amino-acid polypeptide reads, in one-letter code: MRSAFYISDGTAITSEVFGHALLSLFPTEFEHHTISFIETTEKALAAKERINKATSRGGKPALVFHTFVNNENREIIESCDAVLYNFLEPFVAPLEKELAIKAKPTTHRTHSIHEKSYDYRIEAVNYALTNDDGSNVTNYEEADVILVGVSRSGKTPSSLYLALQYGIKAANYPFTDDDMEELKIPSFLKPFHKKLFGLTIDAQRLIDIRDGRMANSKYSSARQCRMEVREVEKLYKNEQIPFINTTKLSVEEITAKILTETGLQRYKY.

149–156 (GVSRSGKT) serves as a coordination point for ADP.

Belongs to the pyruvate, phosphate/water dikinase regulatory protein family. PSRP subfamily.

It carries out the reaction [pyruvate, water dikinase] + ADP = [pyruvate, water dikinase]-phosphate + AMP + H(+). The enzyme catalyses [pyruvate, water dikinase]-phosphate + phosphate + H(+) = [pyruvate, water dikinase] + diphosphate. In terms of biological role, bifunctional serine/threonine kinase and phosphorylase involved in the regulation of the phosphoenolpyruvate synthase (PEPS) by catalyzing its phosphorylation/dephosphorylation. The protein is Putative phosphoenolpyruvate synthase regulatory protein of Colwellia psychrerythraea (strain 34H / ATCC BAA-681) (Vibrio psychroerythus).